Reading from the N-terminus, the 267-residue chain is Tryptophan synthase alpha chain (267 aa).

Residues E47 and D58 each act as proton acceptor in the active site.

This sequence belongs to the TrpA family. As to quaternary structure, tetramer of two alpha and two beta chains.

It carries out the reaction (1S,2R)-1-C-(indol-3-yl)glycerol 3-phosphate + L-serine = D-glyceraldehyde 3-phosphate + L-tryptophan + H2O. It functions in the pathway amino-acid biosynthesis; L-tryptophan biosynthesis; L-tryptophan from chorismate: step 5/5. Its function is as follows. The alpha subunit is responsible for the aldol cleavage of indoleglycerol phosphate to indole and glyceraldehyde 3-phosphate. The polypeptide is Tryptophan synthase alpha chain (Pelodictyon phaeoclathratiforme (strain DSM 5477 / BU-1)).